Here is a 203-residue protein sequence, read N- to C-terminus: Putative 3-methyladenine DNA glycosylase (203 aa).

Belongs to the DNA glycosylase MPG family.

This chain is Putative 3-methyladenine DNA glycosylase, found in Mycobacterium tuberculosis (strain ATCC 25177 / H37Ra).